The sequence spans 139 residues: Maximins 4/H3 type 7 (139 aa).

Positions 1-18 are cleaved as a signal peptide; the sequence is MNFKYIVAVSFLIASAYA. The propeptide occupies 19 to 43; the sequence is RSVQNDEQSLSQRDVLEEESLREIR. Asparagine amide is present on Asn-70. The propeptide occupies 74-118; it reads TAEDHEVMKRLEAIMRDLDSLDYPEEASERETRGFNQDEIAKEKR. An Isoleucine amide modification is found at Ile-138.

The protein belongs to the bombinin family. Expressed by the skin glands.

The protein resides in the secreted. Maximin-4 shows antibacterial activity against both Gram-positive and Gram-negative bacteria. It also shows antimicrobial activity against the fungus C.albicans, but not against A.flavus nor P.uticale. It has little hemolytic activity. It does not possess a significant cytotoxicity against tumor cell lines. It does not possess a significant anti-HIV activity. Functionally, maximin-H3 shows antibacterial activity against both Gram-positive and Gram-negative bacteria. It also shows antimicrobial activity against the fungus C.albicans. Shows strong hemolytic activity. The polypeptide is Maximins 4/H3 type 7 (Bombina maxima (Giant fire-bellied toad)).